Reading from the N-terminus, the 294-residue chain is Ribosomal protein L11 methyltransferase (294 aa).

Positions 146, 167, 189, and 231 each coordinate S-adenosyl-L-methionine.

Belongs to the methyltransferase superfamily. PrmA family.

Its subcellular location is the cytoplasm. The catalysed reaction is L-lysyl-[protein] + 3 S-adenosyl-L-methionine = N(6),N(6),N(6)-trimethyl-L-lysyl-[protein] + 3 S-adenosyl-L-homocysteine + 3 H(+). Functionally, methylates ribosomal protein L11. In Aliivibrio fischeri (strain ATCC 700601 / ES114) (Vibrio fischeri), this protein is Ribosomal protein L11 methyltransferase.